Here is a 905-residue protein sequence, read N- to C-terminus: DNA mismatch repair protein MutS (905 aa).

The segment at 389–410 (ERPANPEGTYPTDAETSGDTLP) is disordered. ATP is bound at residue 638–645 (GPNMAGKS). The interval 826–847 (RDAARGTNSAPSRQTLPGLDLP) is disordered. Over residues 831–840 (GTNSAPSRQT) the composition is skewed to polar residues.

It belongs to the DNA mismatch repair MutS family.

Its function is as follows. This protein is involved in the repair of mismatches in DNA. It is possible that it carries out the mismatch recognition step. This protein has a weak ATPase activity. In Nitratidesulfovibrio vulgaris (strain ATCC 29579 / DSM 644 / CCUG 34227 / NCIMB 8303 / VKM B-1760 / Hildenborough) (Desulfovibrio vulgaris), this protein is DNA mismatch repair protein MutS.